Reading from the N-terminus, the 466-residue chain is MVFLSGNASDSSNCTHPPAPVNISKAILLGVILGGLILFGVLGNILVILSVACHRHLHSVTHYYIVNLAVADLLLTSTVLPFSAIFEILGYWAFGRVFCNIWAAVDVLCCTASIISLCVISIDRYIGVSYPLRYPTIVTQRRGLRALLCVWAFSLVISVGPLFGWRQPAPDDETICQINEEPGYVLFSALGSFYVPLTIILAMYCRVYVVAKRESRGLKSGLKTDKSDSEQVTLRIHRKNAPAGGSGVASAKNKTHFSVRLLKFSREKKAAKTLGIVVGCFVLCWLPFFLVMPIGSFFPDFKPPETVFKIVFWLGYLNSCINPIIYPCSSQEFKKAFQNVLKIQCLRRKQSSKHALGYTLHAPSQALEGQHKDMVRIPVGSGETFYKISKTDGVCEWKFFSSMPRGSARITVPKDQSACTTARVRSKSFLQVCCCVGPSTPNPGENHQVPTIKIHTISLSENGEEV.

At 1–25 the chain is on the extracellular side; sequence MVFLSGNASDSSNCTHPPAPVNISK. N7, N13, and N22 each carry an N-linked (GlcNAc...) asparagine glycan. Residues 26–51 form a helical membrane-spanning segment; the sequence is AILLGVILGGLILFGVLGNILVILSV. Residues 52 to 63 lie on the Cytoplasmic side of the membrane; that stretch reads ACHRHLHSVTHY. The helical transmembrane segment at 64 to 89 threads the bilayer; the sequence is YIVNLAVADLLLTSTVLPFSAIFEIL. The Extracellular portion of the chain corresponds to 90–99; it reads GYWAFGRVFC. The chain crosses the membrane as a helical span at residues 100-122; sequence NIWAAVDVLCCTASIISLCVISI. At 123-143 the chain is on the cytoplasmic side; sequence DRYIGVSYPLRYPTIVTQRRG. The helical transmembrane segment at 144–168 threads the bilayer; that stretch reads LRALLCVWAFSLVISVGPLFGWRQP. Residues 169-181 are Extracellular-facing; the sequence is APDDETICQINEE. A helical membrane pass occupies residues 182–205; it reads PGYVLFSALGSFYVPLTIILAMYC. Residues 206 to 272 lie on the Cytoplasmic side of the membrane; that stretch reads RVYVVAKRES…KFSREKKAAK (67 aa). A helical transmembrane segment spans residues 273–297; sequence TLGIVVGCFVLCWLPFFLVMPIGSF. Topologically, residues 298 to 304 are extracellular; it reads FPDFKPP. Residues 305–329 form a helical membrane-spanning segment; that stretch reads ETVFKIVFWLGYLNSCINPIIYPCS. Over 330 to 466 the chain is Cytoplasmic; the sequence is SQEFKKAFQN…ISLSENGEEV (137 aa). Positions 334–349 match the Nuclear localization signal motif; that stretch reads KKAFQNVLKIQCLRRK. Residue C345 is the site of S-palmitoyl cysteine attachment.

It belongs to the G-protein coupled receptor 1 family. Adrenergic receptor subfamily. ADRA1A sub-subfamily. Homo- and heterooligomer. Heterooligomerizes with ADRA1B homooligomers in cardiac myocytes. Interacts with CAVIN4. As to expression, abundant in liver, vas deferens, brain, and aorta, but not in heart.

The protein localises to the nucleus membrane. Its subcellular location is the cell membrane. It is found in the cytoplasm. The protein resides in the membrane. It localises to the caveola. Its function is as follows. This alpha-adrenergic receptor mediates its action by association with G proteins that activate a phosphatidylinositol-calcium second messenger system. Its effect is mediated by G(q) and G(11) proteins. Nuclear ADRA1A-ADRA1B heterooligomers regulate phenylephrine (PE)-stimulated ERK signaling in cardiac myocytes. This chain is Alpha-1A adrenergic receptor (ADRA1A), found in Oryctolagus cuniculus (Rabbit).